Here is a 525-residue protein sequence, read N- to C-terminus: uncharacterized protein (525 aa).

Polar residues-rich tracts occupy residues 139 to 149 and 336 to 349; these read LNSTPDKTQAG and SGKTDNAQETHTTS. 2 disordered regions span residues 139–158 and 330–356; these read LNSTPDKTQAGKTAKQHQAP and PAPAKNSGKTDNAQETHTTSPPGPYAT.

This is an uncharacterized protein from Treponema pallidum (strain Nichols).